The chain runs to 252 residues: Triosephosphate isomerase (252 aa).

Substrate is bound at residue 10 to 12; sequence NWK. The active-site Electrophile is the His96. Glu168 serves as the catalytic Proton acceptor. Residues Gly174, Ser214, and 235–236 each bind substrate; that span reads GG.

Belongs to the triosephosphate isomerase family. In terms of assembly, homodimer.

Its subcellular location is the cytoplasm. It carries out the reaction D-glyceraldehyde 3-phosphate = dihydroxyacetone phosphate. Its pathway is carbohydrate biosynthesis; gluconeogenesis. It functions in the pathway carbohydrate degradation; glycolysis; D-glyceraldehyde 3-phosphate from glycerone phosphate: step 1/1. Involved in the gluconeogenesis. Catalyzes stereospecifically the conversion of dihydroxyacetone phosphate (DHAP) to D-glyceraldehyde-3-phosphate (G3P). The sequence is that of Triosephosphate isomerase from Lactococcus lactis subsp. cremoris (strain MG1363).